Consider the following 792-residue polypeptide: Probable beta-D-xylosidase 6 (792 aa).

Residues 1-18 (MNLQLTLISLLFFTSAIA) form the signal peptide. 4 N-linked (GlcNAc...) asparagine glycosylation sites follow: Asn44, Asn104, Asn124, and Asn239. Residue Asp309 is part of the active site. 2 N-linked (GlcNAc...) asparagine glycosylation sites follow: Asn444 and Asn618.

It belongs to the glycosyl hydrolase 3 family.

The protein localises to the secreted. It is found in the extracellular space. The protein resides in the extracellular matrix. This is Probable beta-D-xylosidase 6 (BXL6) from Arabidopsis thaliana (Mouse-ear cress).